Reading from the N-terminus, the 349-residue chain is Core protein VP7 (349 aa).

Residue Asn287 is glycosylated (N-linked (GlcNAc...) asparagine; by host).

Belongs to the orbivirus VP7 family. As to quaternary structure, homotrimer that assemble in a complex of 260 capsomers on an inner scaffold composed of VP3.

It is found in the virion. The VP7 protein is one of the five proteins (with VP1, VP3, VP4, and VP6) which form the inner capsid of the virus. The polypeptide is Core protein VP7 (Segment-7) (Bluetongue virus 1 (isolate Australia) (BTV 1)).